Reading from the N-terminus, the 659-residue chain is Interferon-induced GTP-binding protein Mx2 (659 aa).

A Dynamin-type G domain is found at 65–338 (DLALPAIAVI…LISHICKSLP (274 aa)). The tract at residues 75–82 (GDQSSGKS) is G1 motif. 75-82 (GDQSSGKS) provides a ligand contact to GTP. Positions 100-102 (VTR) are G2 motif. Residues 176-179 (DLPG) form a G3 motif region. Residues 176 to 180 (DLPGI) and 245 to 248 (TKPD) each bind GTP. The G4 motif stretch occupies residues 245–248 (TKPD). Residues 277–280 (KCRG) are G5 motif. Positions 547–567 (EAEEEERKHGKSRSSQSKNLQ) are disordered. A GED domain is found at 571–659 (MDEIFQHLNA…AQRRLAKFPG (89 aa)).

The protein belongs to the TRAFAC class dynamin-like GTPase superfamily. Dynamin/Fzo/YdjA family.

It is found in the cytoplasm. Its function is as follows. Interferon-induced dynamin-like GTPase with antiviral activity against vesicular stomatitis virus (VSV). In Rattus norvegicus (Rat), this protein is Interferon-induced GTP-binding protein Mx2 (Mx2).